The sequence spans 266 residues: Translation initiation factor 2 subunit alpha (266 aa).

The 72-residue stretch at 12 to 83 (GEILIATVKQ…RKGTVDVSLK (72 aa)) folds into the S1 motif domain.

This sequence belongs to the eIF-2-alpha family. Heterotrimer composed of an alpha, a beta and a gamma chain.

EIF-2 functions in the early steps of protein synthesis by forming a ternary complex with GTP and initiator tRNA. This Saccharolobus solfataricus (strain ATCC 35092 / DSM 1617 / JCM 11322 / P2) (Sulfolobus solfataricus) protein is Translation initiation factor 2 subunit alpha.